Reading from the N-terminus, the 404-residue chain is 6-deoxyerythronolide B hydroxylase (404 aa).

Residue Cys-351 participates in heme binding.

Belongs to the cytochrome P450 family. The cofactor is heme.

The protein localises to the cytoplasm. It catalyses the reaction 6-deoxyerythronolide B + 2 reduced [2Fe-2S]-[ferredoxin] + O2 + 2 H(+) = erythronolide B + 2 oxidized [2Fe-2S]-[ferredoxin] + H2O. It participates in antibiotic biosynthesis; erythromycin biosynthesis. Its function is as follows. Catalyzes the conversion of 6-deoxyerythronolide B (6-DEB) to erythronolide B (EB) by the insertion of an oxygen at the 6S position of 6-DEB. Requires the participation of a ferredoxin and a ferredoxin reductase for the transfer of electrons from NADPH to the monooxygenase. The chain is 6-deoxyerythronolide B hydroxylase from Saccharopolyspora erythraea (strain ATCC 11635 / DSM 40517 / JCM 4748 / NBRC 13426 / NCIMB 8594 / NRRL 2338).